The primary structure comprises 934 residues: 3-hydroxy-3-methylglutaryl-coenzyme A reductase (934 aa).

Over 1–111 the chain is Lumenal; that stretch reads MFYHGASANQ…VLNLVRGAET (111 aa). Residues 112-132 traverse the membrane as a helical segment; it reads FDIALVTCAYIAMFYTLFNLF. Positions 113–280 constitute an SSD domain; sequence DIALVTCAYI…STFLSAILSL (168 aa). Over 133 to 141 the chain is Cytoplasmic; that stretch reads ARMRAVGSK. The chain crosses the membrane as a helical span at residues 142-162; sequence VWLGLSTLVSSFFAFLFALYI. The Lumenal segment spans residues 163-168; the sequence is TTRVLD. Residues 169 to 189 form a helical membrane-spanning segment; the sequence is LSIPFLSLSEGIPFFVAVVGF. At 190–231 the chain is on the cytoplasmic side; that stretch reads NNKILLAEKVLQNQLNAQSSKNDAPTVLYQALREQGPLLLRD. Residues 232 to 252 traverse the membrane as a helical segment; it reads HLFMITAFLGCSFYASYLDGL. The Lumenal portion of the chain corresponds to 253–256; sequence KNFC. The helical transmembrane segment at 257–277 threads the bilayer; the sequence is ILAALILAFDILTTSTFLSAI. At 278-334 the chain is on the cytoplasmic side; the sequence is LSLKLEINQIHRSTLLREQLEDDGLTETTVDDVLKSNSLAGTKTFTDAPSTLVTVAK. A helical transmembrane segment spans residues 335–355; that stretch reads VAGVSVFFGLHFYGFGSAWLS. The Lumenal segment spans residues 356-421; it reads DLSAGNETND…GLISTAARDK (66 aa). Residues Asn-361, Asn-364, and Asn-382 are each glycosylated (N-linked (GlcNAc...) asparagine). Residues 422–442 traverse the membrane as a helical segment; the sequence is YISKFILFAFAVSASINVYLL. The Cytoplasmic portion of the chain corresponds to 443–934; the sequence is NVARIHTTRL…MQHNRAAAKK (492 aa). Catalysis depends on Glu-618, which acts as the Charge relay system. Position 624–630 (624–630) interacts with CoA; sequence SAMRGCK. Residues 685–687 and 712–720 each bind NADP(+); these read SRF and DAMGMNMIS. The active-site Charge relay system is the Lys-752. Position 781–783 (781–783) interacts with CoA; sequence VLK. Residue Asp-828 is the Charge relay system of the active site. 923–924 lines the CoA pocket; the sequence is SH. The Proton donor role is filled by His-924. 928 to 929 is a binding site for NADP(+); the sequence is NR.

The protein belongs to the HMG-CoA reductase family.

The protein localises to the endoplasmic reticulum membrane. It catalyses the reaction (R)-mevalonate + 2 NADP(+) + CoA = (3S)-3-hydroxy-3-methylglutaryl-CoA + 2 NADPH + 2 H(+). It participates in metabolic intermediate biosynthesis; (R)-mevalonate biosynthesis; (R)-mevalonate from acetyl-CoA: step 3/3. Functionally, HMG-CoA reductase; part of the first module of ergosterol biosynthesis pathway that includes the early steps of the pathway, conserved across all eukaryotes, and which results in the formation of mevalonate from acetyl-coenzyme A (acetyl-CoA). In this module, the cytosolic acetyl-CoA acetyltransferase catalyzes the formation of acetoacetyl-CoA. The hydroxymethylglutaryl-CoA synthase then condenses acetyl-CoA with acetoacetyl-CoA to form HMG-CoA. The rate-limiting step of the early module is the reduction to mevalonate by the 3-hydroxy-3-methylglutaryl-coenzyme A (HMG-CoA) reductase. This is 3-hydroxy-3-methylglutaryl-coenzyme A reductase from Cyberlindnera jadinii (Torula yeast).